Here is a 108-residue protein sequence, read N- to C-terminus: PTS system fructose-like EIIB component 1 (108 aa).

In terms of domain architecture, PTS EIIB type-2 spans 1–104 (MSKKLIALCA…IIKEIEEMIA (104 aa)). The active-site Phosphocysteine intermediate is the C11. C11 is modified (phosphocysteine; by EIIA).

The protein resides in the cytoplasm. The catalysed reaction is D-fructose(out) + N(pros)-phospho-L-histidyl-[protein] = D-fructose 1-phosphate(in) + L-histidyl-[protein]. The phosphoenolpyruvate-dependent sugar phosphotransferase system (sugar PTS), a major carbohydrate active transport system, catalyzes the phosphorylation of incoming sugar substrates concomitantly with their translocation across the cell membrane. The enzyme II FryABC PTS system is involved in fructose transport. The sequence is that of PTS system fructose-like EIIB component 1 (fryB) from Escherichia coli O157:H7.